We begin with the raw amino-acid sequence, 291 residues long: Elongation factor Ts (291 aa).

An involved in Mg(2+) ion dislocation from EF-Tu region spans residues 80–83 (TDFV).

This sequence belongs to the EF-Ts family.

The protein localises to the cytoplasm. In terms of biological role, associates with the EF-Tu.GDP complex and induces the exchange of GDP to GTP. It remains bound to the aminoacyl-tRNA.EF-Tu.GTP complex up to the GTP hydrolysis stage on the ribosome. The protein is Elongation factor Ts of Acinetobacter baumannii (strain AB307-0294).